The primary structure comprises 211 residues: Redox-sensing transcriptional repressor Rex (211 aa).

The H-T-H motif DNA-binding region spans 18–57 (LYYRFLENLHASGKQRVSSSELSEAVKVDSATIRRDFSYF). Position 92–97 (92–97 (GVGNLG)) interacts with NAD(+).

It belongs to the transcriptional regulatory Rex family. In terms of assembly, homodimer.

The protein resides in the cytoplasm. In terms of biological role, modulates transcription in response to changes in cellular NADH/NAD(+) redox state. This is Redox-sensing transcriptional repressor Rex from Halalkalibacterium halodurans (strain ATCC BAA-125 / DSM 18197 / FERM 7344 / JCM 9153 / C-125) (Bacillus halodurans).